An 848-amino-acid polypeptide reads, in one-letter code: Translation initiation factor IF-2 (848 aa).

Positions arginine 90–arginine 253 are disordered. The span at glutamate 105–aspartate 170 shows a compositional bias: low complexity. Composition is skewed to basic residues over residues proline 204 to arginine 215 and lysine 236 to arginine 248. A tr-type G domain is found at lysine 344–glutamate 511. The segment at glycine 353–threonine 360 is G1. Glycine 353 to threonine 360 is a binding site for GTP. The G2 stretch occupies residues glycine 378–histidine 382. The tract at residues aspartate 399–glycine 402 is G3. Residues aspartate 399–histidine 403 and asparagine 453–aspartate 456 each bind GTP. The G4 stretch occupies residues asparagine 453–aspartate 456. The tract at residues serine 489–histidine 491 is G5.

Belongs to the TRAFAC class translation factor GTPase superfamily. Classic translation factor GTPase family. IF-2 subfamily.

The protein localises to the cytoplasm. Functionally, one of the essential components for the initiation of protein synthesis. Protects formylmethionyl-tRNA from spontaneous hydrolysis and promotes its binding to the 30S ribosomal subunits. Also involved in the hydrolysis of GTP during the formation of the 70S ribosomal complex. This chain is Translation initiation factor IF-2, found in Marinobacter nauticus (strain ATCC 700491 / DSM 11845 / VT8) (Marinobacter aquaeolei).